The sequence spans 350 residues: Protein FAM118B (350 aa).

An N-acetylalanine modification is found at Ala-2. Ser-9 bears the Phosphoserine mark. The interval 330-350 is disordered; the sequence is AREGQLNGSSAAHGEIRGCST.

It belongs to the FAM118 family.

Its subcellular location is the nucleus. It is found in the cajal body. Its function is as follows. May play a role in Cajal bodies formation. This Rattus norvegicus (Rat) protein is Protein FAM118B (Fam118b).